Reading from the N-terminus, the 182-residue chain is Ribosome-recycling factor (182 aa).

Belongs to the RRF family.

It is found in the cytoplasm. Functionally, responsible for the release of ribosomes from messenger RNA at the termination of protein biosynthesis. May increase the efficiency of translation by recycling ribosomes from one round of translation to another. In Prochlorococcus marinus (strain AS9601), this protein is Ribosome-recycling factor.